We begin with the raw amino-acid sequence, 173 residues long: 6,7-dimethyl-8-ribityllumazine synthase (173 aa).

Residues Tyr34, 65–67 (ALE), and 94–96 (CVI) each bind 5-amino-6-(D-ribitylamino)uracil. 99–100 (ET) is a binding site for (2S)-2-hydroxy-3-oxobutyl phosphate. The active-site Proton donor is His102. Asn127 contributes to the 5-amino-6-(D-ribitylamino)uracil binding site. Arg141 serves as a coordination point for (2S)-2-hydroxy-3-oxobutyl phosphate.

Belongs to the DMRL synthase family.

It catalyses the reaction (2S)-2-hydroxy-3-oxobutyl phosphate + 5-amino-6-(D-ribitylamino)uracil = 6,7-dimethyl-8-(1-D-ribityl)lumazine + phosphate + 2 H2O + H(+). It participates in cofactor biosynthesis; riboflavin biosynthesis; riboflavin from 2-hydroxy-3-oxobutyl phosphate and 5-amino-6-(D-ribitylamino)uracil: step 1/2. Its function is as follows. Catalyzes the formation of 6,7-dimethyl-8-ribityllumazine by condensation of 5-amino-6-(D-ribitylamino)uracil with 3,4-dihydroxy-2-butanone 4-phosphate. This is the penultimate step in the biosynthesis of riboflavin. The protein is 6,7-dimethyl-8-ribityllumazine synthase of Methylorubrum extorquens (strain CM4 / NCIMB 13688) (Methylobacterium extorquens).